A 751-amino-acid polypeptide reads, in one-letter code: ABC transporter G family member 22 (751 aa).

The interval 26–81 (ADIRSPHGSMDANGVPATAPAAVGGGGTLSRKSSRRLMGMSPGRSSGAGTHIRKSR) is disordered. Residues 157–403 (LKFRDVTYKV…FSSIGCSPLI (247 aa)) enclose the ABC transporter domain. 197-204 (GPSGSGKT) is an ATP binding site. The ABC transmembrane type-2 domain occupies 498-707 (EQYCILFCRG…TYKLLLKVQY (210 aa)). The next 6 membrane-spanning stretches (helical) occupy residues 516-536 (FSWL…LLWW), 552-572 (LLFF…IFAF), 602-622 (LPLD…MTGL), 634-654 (LTVF…GAIL), 666-686 (VTVM…PVFI), and 722-742 (GLTE…LAYL).

The protein belongs to the ABC transporter superfamily. ABCG family. Eye pigment precursor importer (TC 3.A.1.204) subfamily.

The protein localises to the membrane. This chain is ABC transporter G family member 22 (ABCG22), found in Arabidopsis thaliana (Mouse-ear cress).